Reading from the N-terminus, the 957-residue chain is Glycine dehydrogenase (decarboxylating) (957 aa).

Position 708 is an N6-(pyridoxal phosphate)lysine (Lys708).

Belongs to the GcvP family. The glycine cleavage system is composed of four proteins: P, T, L and H. The cofactor is pyridoxal 5'-phosphate.

It carries out the reaction N(6)-[(R)-lipoyl]-L-lysyl-[glycine-cleavage complex H protein] + glycine + H(+) = N(6)-[(R)-S(8)-aminomethyldihydrolipoyl]-L-lysyl-[glycine-cleavage complex H protein] + CO2. Its function is as follows. The glycine cleavage system catalyzes the degradation of glycine. The P protein binds the alpha-amino group of glycine through its pyridoxal phosphate cofactor; CO(2) is released and the remaining methylamine moiety is then transferred to the lipoamide cofactor of the H protein. This is Glycine dehydrogenase (decarboxylating) from Escherichia coli O8 (strain IAI1).